We begin with the raw amino-acid sequence, 549 residues long: Rhodopsin kinase grk7a (549 aa).

Ser33 bears the Phosphoserine mark. The RGS domain maps to 53 to 171 (FESLCEKQPI…QASPFFDKFL (119 aa)). Residues 186 to 449 (FYEFRTLGKG…NDDPRKHEWF (264 aa)) form the Protein kinase domain. ATP contacts are provided by residues 192–200 (LGKGGFGEV) and Lys215. Asp311 serves as the catalytic Proton acceptor. The region spanning 450-515 (KSINFARLEA…GAVSIAWQQE (66 aa)) is the AGC-kinase C-terminal domain. The tract at residues 522 to 549 (FDELSDPNRKESSGGSDDDKKSGTCTLL) is disordered. Residues 527 to 543 (DPNRKESSGGSDDDKKS) show a composition bias toward basic and acidic residues. Cys546 is modified (cysteine methyl ester). The S-geranylgeranyl cysteine moiety is linked to residue Cys546. The propeptide at 547–549 (TLL) is removed in mature form.

It belongs to the protein kinase superfamily. AGC Ser/Thr protein kinase family. GPRK subfamily. Phosphorylation at Ser-33 is regulated by light and activated by cAMP.

Its subcellular location is the membrane. The enzyme catalyses L-threonyl-[rhodopsin] + ATP = O-phospho-L-threonyl-[rhodopsin] + ADP + H(+). It catalyses the reaction L-seryl-[rhodopsin] + ATP = O-phospho-L-seryl-[rhodopsin] + ADP + H(+). Functionally, retina-specific kinase involved in the shutoff of the photoresponse and adaptation to changing light conditions via cone opsin phosphorylation, including rhodopsin (RHO). The sequence is that of Rhodopsin kinase grk7a (grk7a) from Danio rerio (Zebrafish).